The primary structure comprises 422 residues: Protein arginine methyltransferase NDUFAF7, mitochondrial (422 aa).

A mitochondrion-targeting transit peptide spans Met1–Lys28.

This sequence belongs to the NDUFAF7 family.

Its subcellular location is the mitochondrion. It catalyses the reaction L-arginyl-[protein] + 2 S-adenosyl-L-methionine = N(omega),N(omega)'-dimethyl-L-arginyl-[protein] + 2 S-adenosyl-L-homocysteine + 2 H(+). Its function is as follows. Arginine methyltransferase involved in the assembly or stability of mitochondrial NADH:ubiquinone oxidoreductase complex (complex I). Acts by mediating symmetric dimethylation of 'Arg-118' of ndufs2 after it assembles into the complex I, stabilizing the early intermediate complex. The chain is Protein arginine methyltransferase NDUFAF7, mitochondrial from Danio rerio (Zebrafish).